A 185-amino-acid chain; its full sequence is Ribosome-recycling factor (185 aa).

The protein belongs to the RRF family.

Its subcellular location is the cytoplasm. Responsible for the release of ribosomes from messenger RNA at the termination of protein biosynthesis. May increase the efficiency of translation by recycling ribosomes from one round of translation to another. The polypeptide is Ribosome-recycling factor (Streptococcus pyogenes serotype M1).